A 212-amino-acid polypeptide reads, in one-letter code: Ribonuclease HII (212 aa).

Residues 22–212 form the RNase H type-2 domain; it reads ILIAGLDEAG…APLKGMIDGL (191 aa). 3 residues coordinate a divalent metal cation: Asp-28, Glu-29, and Asp-123.

This sequence belongs to the RNase HII family. Requires Mn(2+) as cofactor. It depends on Mg(2+) as a cofactor.

The protein localises to the cytoplasm. It carries out the reaction Endonucleolytic cleavage to 5'-phosphomonoester.. Endonuclease that specifically degrades the RNA of RNA-DNA hybrids. The polypeptide is Ribonuclease HII (Dehalococcoides mccartyi (strain ATCC BAA-2100 / JCM 16839 / KCTC 5957 / BAV1)).